Consider the following 145-residue polypeptide: uncharacterized protein (145 aa).

The first 20 residues, 1 to 20, serve as a signal peptide directing secretion; that stretch reads MPSKVCTLILLFSVINQMKC.

This is an uncharacterized protein from Caenorhabditis elegans.